The chain runs to 509 residues: Acetyl-coenzyme A carboxylase carboxyl transferase subunit beta, chloroplastic (509 aa).

The disordered stretch occupies residues 164 to 216 (HGSVCDGESHNSSEGESSSRRTHTKGVDLTIRESSNENERESSNENERKSSND). Basic and acidic residues-rich tracts occupy residues 170–182 (GESH…ESSS) and 193–216 (TIRE…SSND). Positions 226-509 (LWLQCENCYG…LNQNSNQVEC (284 aa)) constitute a CoA carboxyltransferase N-terminal domain. Residues Cys-230, Cys-233, Cys-249, and Cys-252 each coordinate Zn(2+). A C4-type zinc finger spans residues 230-252 (CENCYGLNYKKFLKSKMNICEQC). The tract at residues 288–307 (FDSEGEQEQEQEQEQEEEET) is disordered.

It belongs to the AccD/PCCB family. In terms of assembly, acetyl-CoA carboxylase is a heterohexamer composed of biotin carboxyl carrier protein, biotin carboxylase and 2 subunits each of ACCase subunit alpha and ACCase plastid-coded subunit beta (accD). The cofactor is Zn(2+).

The protein resides in the plastid. The protein localises to the chloroplast stroma. It carries out the reaction N(6)-carboxybiotinyl-L-lysyl-[protein] + acetyl-CoA = N(6)-biotinyl-L-lysyl-[protein] + malonyl-CoA. It participates in lipid metabolism; malonyl-CoA biosynthesis; malonyl-CoA from acetyl-CoA: step 1/1. Its function is as follows. Component of the acetyl coenzyme A carboxylase (ACC) complex. Biotin carboxylase (BC) catalyzes the carboxylation of biotin on its carrier protein (BCCP) and then the CO(2) group is transferred by the transcarboxylase to acetyl-CoA to form malonyl-CoA. This Ipomoea purpurea (Common morning glory) protein is Acetyl-coenzyme A carboxylase carboxyl transferase subunit beta, chloroplastic.